Reading from the N-terminus, the 122-residue chain is MIQTESRLEVADNTGAREVLCIKVLGGSKRRYASVGDIIKVTVKDAAPRGRVKKGDIYNAVVVRTAKGVRRADGSLVKFDGNAAVLLNNKLEPIGTRIFGPVTRELRTERFMKIVSLAPEVL.

It belongs to the universal ribosomal protein uL14 family. As to quaternary structure, part of the 50S ribosomal subunit. Forms a cluster with proteins L3 and L19. In the 70S ribosome, L14 and L19 interact and together make contacts with the 16S rRNA in bridges B5 and B8.

In terms of biological role, binds to 23S rRNA. Forms part of two intersubunit bridges in the 70S ribosome. This is Large ribosomal subunit protein uL14 from Cupriavidus metallidurans (strain ATCC 43123 / DSM 2839 / NBRC 102507 / CH34) (Ralstonia metallidurans).